A 545-amino-acid polypeptide reads, in one-letter code: Glucose-6-phosphate isomerase (545 aa).

Residue Glu351 is the Proton donor of the active site. Active-site residues include His382 and Lys510.

The protein belongs to the GPI family.

It is found in the cytoplasm. The catalysed reaction is alpha-D-glucose 6-phosphate = beta-D-fructose 6-phosphate. Its pathway is carbohydrate biosynthesis; gluconeogenesis. The protein operates within carbohydrate degradation; glycolysis; D-glyceraldehyde 3-phosphate and glycerone phosphate from D-glucose: step 2/4. Its function is as follows. Catalyzes the reversible isomerization of glucose-6-phosphate to fructose-6-phosphate. The chain is Glucose-6-phosphate isomerase from Helicobacter acinonychis (strain Sheeba).